Reading from the N-terminus, the 149-residue chain is Ribonuclease H (149 aa).

In terms of domain architecture, RNase H type-1 spans 1–143; that stretch reads MNQVVIYTDG…ADALANKGVD (143 aa). Mg(2+)-binding residues include D9, E47, D69, and D135.

This sequence belongs to the RNase H family. Monomer. Mg(2+) is required as a cofactor.

It is found in the cytoplasm. It carries out the reaction Endonucleolytic cleavage to 5'-phosphomonoester.. Functionally, endonuclease that specifically degrades the RNA of RNA-DNA hybrids. The polypeptide is Ribonuclease H (Paracidovorax citrulli (strain AAC00-1) (Acidovorax citrulli)).